Consider the following 234-residue polypeptide: Thiamine-phosphate synthase (234 aa).

Residues 65–69 (QYRNK) and Asn-97 each bind 4-amino-2-methyl-5-(diphosphooxymethyl)pyrimidine. Mg(2+) is bound by residues Asp-98 and Asp-117. A 4-amino-2-methyl-5-(diphosphooxymethyl)pyrimidine-binding site is contributed by Ser-136. 163 to 165 (SHT) is a 2-[(2R,5Z)-2-carboxy-4-methylthiazol-5(2H)-ylidene]ethyl phosphate binding site. Lys-166 is a binding site for 4-amino-2-methyl-5-(diphosphooxymethyl)pyrimidine. 2-[(2R,5Z)-2-carboxy-4-methylthiazol-5(2H)-ylidene]ethyl phosphate is bound by residues Gly-192 and 212-213 (IS).

It belongs to the thiamine-phosphate synthase family. Mg(2+) is required as a cofactor.

It carries out the reaction 2-[(2R,5Z)-2-carboxy-4-methylthiazol-5(2H)-ylidene]ethyl phosphate + 4-amino-2-methyl-5-(diphosphooxymethyl)pyrimidine + 2 H(+) = thiamine phosphate + CO2 + diphosphate. The enzyme catalyses 2-(2-carboxy-4-methylthiazol-5-yl)ethyl phosphate + 4-amino-2-methyl-5-(diphosphooxymethyl)pyrimidine + 2 H(+) = thiamine phosphate + CO2 + diphosphate. It catalyses the reaction 4-methyl-5-(2-phosphooxyethyl)-thiazole + 4-amino-2-methyl-5-(diphosphooxymethyl)pyrimidine + H(+) = thiamine phosphate + diphosphate. It functions in the pathway cofactor biosynthesis; thiamine diphosphate biosynthesis; thiamine phosphate from 4-amino-2-methyl-5-diphosphomethylpyrimidine and 4-methyl-5-(2-phosphoethyl)-thiazole: step 1/1. Its function is as follows. Condenses 4-methyl-5-(beta-hydroxyethyl)thiazole monophosphate (THZ-P) and 2-methyl-4-amino-5-hydroxymethyl pyrimidine pyrophosphate (HMP-PP) to form thiamine monophosphate (TMP). This is Thiamine-phosphate synthase from Xylella fastidiosa (strain Temecula1 / ATCC 700964).